The chain runs to 285 residues: V-type proton ATPase subunit D (285 aa).

The segment covering 208–226 has biased composition (basic and acidic residues); the sequence is QKTKENAEKADSVTKEEHQ. Positions 208 to 285 are disordered; that stretch reads QKTKENAEKA…ENDSDEEVIF (78 aa). A Phosphoserine modification is found at Ser219. Over residues 227–236 the composition is skewed to polar residues; the sequence is GGSNTLQQTK. Positions 248 to 263 are enriched in basic and acidic residues; it reads VGKEVINEVENSKDDT. A compositionally biased stretch (acidic residues) spans 271-285; that stretch reads TDDEEENDSDEEVIF.

The protein belongs to the V-ATPase D subunit family. V-ATPase is a heteromultimeric enzyme composed of a peripheral catalytic V1 complex (components A to H) attached to an integral membrane V0 proton pore complex (components: a, c, c', c'', d, e, f and VOA1).

The protein resides in the vacuole membrane. Its function is as follows. Subunit of the V1 complex of vacuolar(H+)-ATPase (V-ATPase), a multisubunit enzyme composed of a peripheral complex (V1) that hydrolyzes ATP and a membrane integral complex (V0) that translocates protons. V-ATPase is responsible for acidifying and maintaining the pH of intracellular compartments. This Schizosaccharomyces pombe (strain 972 / ATCC 24843) (Fission yeast) protein is V-type proton ATPase subunit D (vma8).